Consider the following 442-residue polypeptide: 3-isopropylmalate dehydratase large subunit (442 aa).

[4Fe-4S] cluster is bound by residues Xaa347, Cys407, and Cys410.

This sequence belongs to the aconitase/IPM isomerase family. LeuC type 1 subfamily. Heterodimer of LeuC and LeuD. [4Fe-4S] cluster is required as a cofactor.

It carries out the reaction (2R,3S)-3-isopropylmalate = (2S)-2-isopropylmalate. It functions in the pathway amino-acid biosynthesis; L-leucine biosynthesis; L-leucine from 3-methyl-2-oxobutanoate: step 2/4. Functionally, catalyzes the isomerization between 2-isopropylmalate and 3-isopropylmalate, via the formation of 2-isopropylmaleate. The sequence is that of 3-isopropylmalate dehydratase large subunit from Buchnera aphidicola subsp. Macrosiphoniella ludovicianae.